The chain runs to 763 residues: Phosphoglycerol transferase I (763 aa).

4 consecutive transmembrane segments (helical) span residues 1–21, 26–46, 77–97, and 108–128; these read MSEL…AWKA, WWFA…ITLF, ILPG…LGWI, and FGYS…SPAF.

This sequence belongs to the OpgB family.

The protein localises to the cell inner membrane. It catalyses the reaction a phosphatidylglycerol + a membrane-derived-oligosaccharide D-glucose = a 1,2-diacyl-sn-glycerol + a membrane-derived-oligosaccharide 6-(glycerophospho)-D-glucose.. Its pathway is glycan metabolism; osmoregulated periplasmic glucan (OPG) biosynthesis. Its function is as follows. Transfers a phosphoglycerol residue from phosphatidylglycerol to the membrane-bound nascent glucan backbones. The chain is Phosphoglycerol transferase I from Escherichia coli (strain 55989 / EAEC).